The sequence spans 430 residues: Glutamate-1-semialdehyde 2,1-aminomutase (430 aa).

Position 267 is an N6-(pyridoxal phosphate)lysine (K267).

Belongs to the class-III pyridoxal-phosphate-dependent aminotransferase family. HemL subfamily. In terms of assembly, homodimer. It depends on pyridoxal 5'-phosphate as a cofactor.

The protein resides in the cytoplasm. It catalyses the reaction (S)-4-amino-5-oxopentanoate = 5-aminolevulinate. It participates in porphyrin-containing compound metabolism; protoporphyrin-IX biosynthesis; 5-aminolevulinate from L-glutamyl-tRNA(Glu): step 2/2. This Desulfotalea psychrophila (strain LSv54 / DSM 12343) protein is Glutamate-1-semialdehyde 2,1-aminomutase.